We begin with the raw amino-acid sequence, 350 residues long: Dihydroorotate dehydrogenase (quinone) (350 aa).

FMN is bound by residues 61–65 and Thr-85; that span reads AGLDK. Lys-65 provides a ligand contact to substrate. 110-114 is a binding site for substrate; that stretch reads NRMGF. FMN is bound by residues Asn-139 and Asn-172. Asn-172 lines the substrate pocket. The active-site Nucleophile is the Ser-175. Asn-177 lines the substrate pocket. Residues Lys-217 and Thr-245 each contribute to the FMN site. 246-247 lines the substrate pocket; sequence NT. FMN is bound by residues Gly-268, Gly-297, and 318 to 319; that span reads YS.

This sequence belongs to the dihydroorotate dehydrogenase family. Type 2 subfamily. As to quaternary structure, monomer. FMN is required as a cofactor.

The protein resides in the cell membrane. The catalysed reaction is (S)-dihydroorotate + a quinone = orotate + a quinol. Its pathway is pyrimidine metabolism; UMP biosynthesis via de novo pathway; orotate from (S)-dihydroorotate (quinone route): step 1/1. Its function is as follows. Catalyzes the conversion of dihydroorotate to orotate with quinone as electron acceptor. This chain is Dihydroorotate dehydrogenase (quinone), found in Flavobacterium lutescens.